We begin with the raw amino-acid sequence, 1180 residues long: MLDVNNFDRMRIGLASPDLIRQWSSGEVKKPETINYRTLKPERDGLFCERIFGPTRDWECHCGKYKRVRYKGIVCDRCGVEVTRSKVRRERLGHIELAAPVSHIWYFKGIPSRMGLLLDMSPRSLEKVLYFVAYIVIEQGDTPLMKKQLLTETEYREHREKYGNRFRAGMGAEAIKELLVEMDLEQLCRELRQELKEVTGQRKVRAIRRLEVVEAFKNSGNRPEWMIMDVIPVIPPELRPMVQLDGGRFATSDLNDLYRRVINRNNRLKRLLDLGAPDIIVRNEKRMLQEAVDALIDNGRRGRPVTGPGNRPLKSLSDMLKGKQGRFRQNLLGKRVDYSGRSVIVVGPELKLHQCGLPKEMALELFKPFVMKKLVEDGHAHNIKSAKRMVERVKNEVWDVLEDVIAEHPVLLNRAPTLHRLGIQAFEPVLVEGRALQIHPLVCTAYNADFDGDQMAVHVPLSAEAQAEARNLMLSAHNILNPKDGRPVATPTQDMVIGSYYLTIEREGAKGENMIFASPDEAIAAYDAKSVHLQARIRVRPTARLQEALEFAKSEARSFDEQGRLMTTVGRLIFNSVIPPKVGYVNEVVGKKQLGNIVARCYDKLGISETAAMLDGIKKLGYTFSTRAGITVGITDVEVPEEKRRLIAEADSFVEKVEQQYRRGLITEEERYQKVIDIWNKTTDGVTQALMRTLDKFNPVYMMANSGARGNIQQIRQLAGMRGLMADPSGRIIDLPIKANFREGLTVLEYFISTHGARKGLADTALRTADSGYLTRRLVDVSQDVIVREIDCGTHEGIPVEAIVDGKQVIEKLSDRLTGRYALEEIVDPETGEKLAAYNEEIQADAAERIDQLIKQGKLAHNAVYIRSVLTCRTRYGVCRRCYGRNLATGRSVEIGEAVGIIAAQSIGEPGTQLTMRTFHTGGVAGDDITQGLPRVEELFEARKPKGLAIIAEQDGIVRIVDNKGRKDIEIVTDDGESHHYAIPYNSRLKVEDGQRVQAGTELTEGSVNPHDMLRVKGIQGVQTYLLREVQRVYRLQGVDINDKHIEVMVRQMMRKVKVEEPGDTDLLPGGLIDIADFEAENLKAIEAGLEPATARPILLGITKASLATDSFLSAASFQETTRVLTEAAIKGKVDPLLGLKENVIIGKLIPAGTGMSRYRNIQVLVGDEIDEARLEDGMA.

Residues C60, C62, C75, and C78 each contribute to the Zn(2+) site. Mg(2+) is bound by residues D449, D451, and D453. Residues C792, C872, C879, and C882 each coordinate Zn(2+).

It belongs to the RNA polymerase beta' chain family. In terms of assembly, the RNAP catalytic core consists of 2 alpha, 1 beta, 1 beta' and 1 omega subunit. When a sigma factor is associated with the core the holoenzyme is formed, which can initiate transcription. The cofactor is Mg(2+). Zn(2+) is required as a cofactor.

It carries out the reaction RNA(n) + a ribonucleoside 5'-triphosphate = RNA(n+1) + diphosphate. Its function is as follows. DNA-dependent RNA polymerase catalyzes the transcription of DNA into RNA using the four ribonucleoside triphosphates as substrates. This is DNA-directed RNA polymerase subunit beta' from Heliobacterium modesticaldum (strain ATCC 51547 / Ice1).